Reading from the N-terminus, the 284-residue chain is MTAQIIDGKAIAQSIRTQLREQVTARKEAGQRVPGLAVILVGADPASQVYVGSKRKACEEVGFISRSYDLDTSCSEAELLALIDQLNDDPSIDGILVQLPLPAHIEDSKVIERIRPDKDVDGFHPYNVGRLAQRIPVLRSCTPMGIMTLIKSTGVDTYGLDAVVVGASNIVGRPMTLELLLAGCTTTTCHRFTKNLEQKIRQADLVVVAVGKPGFIPGEWIKPGAIVIDVGINRLENGTLVGDVQYETAAQNASFITPVPGGVGPMTIASLLENTLYAAEQYHD.

NADP(+) contacts are provided by residues 166–168 (GAS) and Ile232.

This sequence belongs to the tetrahydrofolate dehydrogenase/cyclohydrolase family. Homodimer.

The enzyme catalyses (6R)-5,10-methylene-5,6,7,8-tetrahydrofolate + NADP(+) = (6R)-5,10-methenyltetrahydrofolate + NADPH. The catalysed reaction is (6R)-5,10-methenyltetrahydrofolate + H2O = (6R)-10-formyltetrahydrofolate + H(+). It participates in one-carbon metabolism; tetrahydrofolate interconversion. Functionally, catalyzes the oxidation of 5,10-methylenetetrahydrofolate to 5,10-methenyltetrahydrofolate and then the hydrolysis of 5,10-methenyltetrahydrofolate to 10-formyltetrahydrofolate. The sequence is that of Bifunctional protein FolD from Shewanella oneidensis (strain ATCC 700550 / JCM 31522 / CIP 106686 / LMG 19005 / NCIMB 14063 / MR-1).